We begin with the raw amino-acid sequence, 448 residues long: Tryptophan dimethylallyltransferase 1 (448 aa).

Residues 80–81 (IL) and glutamate 89 each bind L-tryptophan. 3 residues coordinate substrate: arginine 100, lysine 186, and tyrosine 188. Residues tyrosine 190 and arginine 249 each contribute to the L-tryptophan site. Arginine 262, lysine 264, tyrosine 266, glutamine 348, tyrosine 350, tyrosine 414, and tyrosine 418 together coordinate substrate.

This sequence belongs to the tryptophan dimethylallyltransferase family. Homodimer.

The enzyme catalyses L-tryptophan + dimethylallyl diphosphate = 4-(3-methylbut-2-enyl)-L-tryptophan + diphosphate. It functions in the pathway alkaloid biosynthesis; ergot alkaloid biosynthesis. In terms of biological role, tryptophan dimethylallyltransferase; part of the gene cluster that mediates the biosynthesis of fungal ergot alkaloid. DmaW catalyzes the first step of ergot alkaloid biosynthesis by condensing dimethylallyl diphosphate (DMAP) and tryptophan to form 4-dimethylallyl-L-tryptophan. The second step is catalyzed by the methyltransferase easF that methylates 4-dimethylallyl-L-tryptophan in the presence of S-adenosyl-L-methionine, resulting in the formation of 4-dimethylallyl-L-abrine. The catalase easC and the FAD-dependent oxidoreductase easE then transform 4-dimethylallyl-L-abrine to chanoclavine-I which is further oxidized by easD in the presence of NAD(+), resulting in the formation of chanoclavine-I aldehyde. Agroclavine dehydrogenase easG then mediates the conversion of chanoclavine-I aldehyde to agroclavine via a non-enzymatic adduct reaction: the substrate is an iminium intermediate that is formed spontaneously from chanoclavine-I aldehyde in the presence of glutathione. The presence of easA is not required to complete this reaction. Further conversion of agroclavine to paspalic acid is a two-step process involving oxidation of agroclavine to elymoclavine and of elymoclavine to paspalic acid, the second step being performed by the elymoclavine oxidase cloA. Paspalic acid is then further converted to D-lysergic acid. Ergopeptines are assembled from D-lysergic acid and three different amino acids by the D-lysergyl-peptide-synthetases composed each of a monomudular and a trimodular nonribosomal peptide synthetase subunit. LpsB and lpsC encode the monomodular subunits responsible for D-lysergic acid activation and incorporation into the ergopeptine backbone. LpsA1 and A2 subunits encode the trimodular nonribosomal peptide synthetase assembling the tripeptide portion of ergopeptines. LpsA1 is responsible for formation of the major ergopeptine, ergotamine, and lpsA2 for alpha-ergocryptine, the minor ergopeptine of the total alkaloid mixture elaborated by C.purpurea. D-lysergyl-tripeptides are assembled by the nonribosomal peptide synthetases and released as N-(D-lysergyl-aminoacyl)-lactams. Cyclolization of the D-lysergyl-tripeptides is performed by the Fe(2+)/2-ketoglutarate-dependent dioxygenase easH which introduces a hydroxyl group into N-(D-lysergyl-aminoacyl)-lactam at alpha-C of the aminoacyl residue followed by spontaneous condensation with the terminal lactam carbonyl group. This Claviceps purpurea (strain 20.1) (Ergot fungus) protein is Tryptophan dimethylallyltransferase 1.